Consider the following 674-residue polypeptide: Probable L-type lectin-domain containing receptor kinase II.1 (674 aa).

The first 24 residues, 1-24 (MAGVLGSVVFWLIIGIHVTFLVFA), serve as a signal peptide directing secretion. The Extracellular segment spans residues 25 to 301 (QEGDHFVYYD…PSPKRFPLKE (277 aa)). A legume-lectin like region spans residues 28 to 274 (DHFVYYDFRN…NQYILGWSFK (247 aa)). N-linked (GlcNAc...) asparagine glycans are attached at residues Asn-57, Asn-117, Asn-133, Asn-185, Asn-210, and Asn-242. Residues 302–322 (VLGATISTIAFLTLGGIVYLY) traverse the membrane as a helical segment. Over 323 to 674 (KKKKYAEVLE…EDVTVLFGGR (352 aa)) the chain is Cytoplasmic. The Protein kinase domain maps to 355 to 633 (FRENQLLGAG…LEGNVSVPAI (279 aa)). Residues 361–369 (LGAGGFGKV) and Lys-383 each bind ATP. Asp-480 (proton acceptor) is an active-site residue.

The protein in the C-terminal section; belongs to the protein kinase superfamily. Ser/Thr protein kinase family. In the N-terminal section; belongs to the leguminous lectin family.

It localises to the cell membrane. It carries out the reaction L-seryl-[protein] + ATP = O-phospho-L-seryl-[protein] + ADP + H(+). The catalysed reaction is L-threonyl-[protein] + ATP = O-phospho-L-threonyl-[protein] + ADP + H(+). The protein is Probable L-type lectin-domain containing receptor kinase II.1 (LECRK21) of Arabidopsis thaliana (Mouse-ear cress).